We begin with the raw amino-acid sequence, 246 residues long: Carboxylesterase (246 aa).

Ser93 functions as the Nucleophile in the catalytic mechanism. Residues Asp192 and His222 each act as charge relay system in the active site.

It belongs to the lipase/esterase LIP3/BchO family. In terms of assembly, homodimer.

It catalyses the reaction a carboxylic ester + H2O = an alcohol + a carboxylate + H(+). Involved in the detoxification of xenobiotics. Shows maximal activity with C6 substrates, with gradually decreasing activity from C8 to C12 substrates. No activity for higher chain length substrates acids rather than long-chain ones. The polypeptide is Carboxylesterase (est) (Bacillus subtilis (strain 168)).